A 683-amino-acid polypeptide reads, in one-letter code: DNA-directed RNA polymerase subunit beta' (683 aa).

Residues C69, C71, C87, and C90 each contribute to the Zn(2+) site. Mg(2+)-binding residues include D492, D494, and D496.

This sequence belongs to the RNA polymerase beta' chain family. RpoC1 subfamily. As to quaternary structure, in plastids the minimal PEP RNA polymerase catalytic core is composed of four subunits: alpha, beta, beta', and beta''. When a (nuclear-encoded) sigma factor is associated with the core the holoenzyme is formed, which can initiate transcription. The cofactor is Mg(2+). Zn(2+) is required as a cofactor.

It is found in the plastid. It localises to the chloroplast. The catalysed reaction is RNA(n) + a ribonucleoside 5'-triphosphate = RNA(n+1) + diphosphate. Its function is as follows. DNA-dependent RNA polymerase catalyzes the transcription of DNA into RNA using the four ribonucleoside triphosphates as substrates. The sequence is that of DNA-directed RNA polymerase subunit beta' from Coffea arabica (Arabian coffee).